Reading from the N-terminus, the 212-residue chain is Pyridoxine/pyridoxamine 5'-phosphate oxidase (212 aa).

FMN-binding positions include 61–66 (RSVLLK), 76–77 (YT), Lys83, and Gln105. Lys66 is a binding site for substrate. Substrate is bound by residues Tyr123, Arg127, and Ser131. FMN-binding positions include 140-141 (QS) and Trp185. 191–193 (RLH) serves as a coordination point for substrate. Arg195 lines the FMN pocket.

This sequence belongs to the pyridoxamine 5'-phosphate oxidase family. Homodimer. FMN serves as cofactor.

The enzyme catalyses pyridoxamine 5'-phosphate + O2 + H2O = pyridoxal 5'-phosphate + H2O2 + NH4(+). The catalysed reaction is pyridoxine 5'-phosphate + O2 = pyridoxal 5'-phosphate + H2O2. It functions in the pathway cofactor metabolism; pyridoxal 5'-phosphate salvage; pyridoxal 5'-phosphate from pyridoxamine 5'-phosphate: step 1/1. It participates in cofactor metabolism; pyridoxal 5'-phosphate salvage; pyridoxal 5'-phosphate from pyridoxine 5'-phosphate: step 1/1. Catalyzes the oxidation of either pyridoxine 5'-phosphate (PNP) or pyridoxamine 5'-phosphate (PMP) into pyridoxal 5'-phosphate (PLP). The sequence is that of Pyridoxine/pyridoxamine 5'-phosphate oxidase from Dichelobacter nodosus (strain VCS1703A).